The primary structure comprises 243 residues: Histone H2B.2 (243 aa).

Residue Ala-2 is modified to N,N,N-trimethylalanine; alternate. The residue at position 2 (Ala-2) is a N,N-dimethylalanine; alternate. Ala-2 is subject to N-methylalanine; alternate. The tract at residues 67–145 is disordered; the sequence is PDERSLPVGE…KKKKKKKRDD (79 aa). Residues 120-132 are compositionally biased toward basic and acidic residues; sequence GTLKKTDKVEKKQ. A compositionally biased stretch (basic residues) spans 133–142; the sequence is ENKKKKKKKK.

Belongs to the histone H2B family. In terms of assembly, the nucleosome is a histone octamer containing two molecules each of H2A, H2B, H3 and H4 assembled in one H3-H4 heterotetramer and two H2A-H2B heterodimers. The octamer wraps approximately 147 bp of DNA. In terms of processing, can be acetylated to form H2BK6ac.

Its subcellular location is the nucleus. The protein localises to the chromosome. Core component of nucleosome. Nucleosomes wrap and compact DNA into chromatin, limiting DNA accessibility to the cellular machineries which require DNA as a template. Histones thereby play a central role in transcription regulation, DNA repair, DNA replication and chromosomal stability. DNA accessibility is regulated via a complex set of post-translational modifications of histones, also called histone code, and nucleosome remodeling. In Arabidopsis thaliana (Mouse-ear cress), this protein is Histone H2B.2.